Consider the following 687-residue polypeptide: Ferric vulnibactin receptor VuuA (687 aa).

The N-terminal stretch at Met-1–Ala-37 is a signal peptide. In terms of domain architecture, TBDR plug spans Thr-63 to Asn-185. Residues His-190–Phe-687 form the TBDR beta-barrel domain. Residues Glu-670–Phe-687 carry the TonB C-terminal box motif.

This sequence belongs to the TonB-dependent receptor family.

It localises to the cell outer membrane. Its function is as follows. Involved in the uptake of iron in complex with vulnibactin, a catecholate siderophore synthesized by V.vulnificus. Binds and transports ferric vulnibactin across the outer membrane. The energy source is provided by the inner membrane TonB system. The protein is Ferric vulnibactin receptor VuuA of Vibrio vulnificus.